A 449-amino-acid chain; its full sequence is Tubulin alpha-1C chain (449 aa).

An MREC motif motif is present at residues 1 to 4; the sequence is MREC. Gln-11 lines the GTP pocket. Lys-40 carries the N6-acetyllysine modification. 7 residues coordinate GTP: Glu-71, Ser-140, Gly-144, Thr-145, Thr-179, Asn-206, and Asn-228. Glu-71 contacts Mg(2+). Residue Glu-254 is part of the active site. At Tyr-282 the chain carries 3'-nitrotyrosine. The segment at 429-449 is disordered; that stretch reads EKDYEEVGADSAEGDDEGDEY. The span at 431-449 shows a compositional bias: acidic residues; sequence DYEEVGADSAEGDDEGDEY. Tyr-432 carries the post-translational modification Phosphotyrosine. Ser-439 carries the post-translational modification Phosphoserine. Tyr-449 bears the 3'-nitrotyrosine mark.

It belongs to the tubulin family. As to quaternary structure, dimer of alpha and beta chains. A typical microtubule is a hollow water-filled tube with an outer diameter of 25 nm and an inner diameter of 15 nM. Alpha-beta heterodimers associate head-to-tail to form protofilaments running lengthwise along the microtubule wall with the beta-tubulin subunit facing the microtubule plus end conferring a structural polarity. Microtubules usually have 13 protofilaments but different protofilament numbers can be found in some organisms and specialized cells. It depends on Mg(2+) as a cofactor. Post-translationally, some glutamate residues at the C-terminus are polyglycylated, resulting in polyglycine chains on the gamma-carboxyl group. Glycylation is mainly limited to tubulin incorporated into axonemes (cilia and flagella) whereas glutamylation is prevalent in neuronal cells, centrioles, axonemes, and the mitotic spindle. Both modifications can coexist on the same protein on adjacent residues, and lowering polyglycylation levels increases polyglutamylation, and reciprocally. Cilia and flagella glycylation is required for their stability and maintenance. Flagella glycylation controls sperm motility. Some glutamate residues at the C-terminus are polyglutamylated, resulting in polyglutamate chains on the gamma-carboxyl group. Polyglutamylation plays a key role in microtubule severing by spastin (SPAST). SPAST preferentially recognizes and acts on microtubules decorated with short polyglutamate tails: severing activity by SPAST increases as the number of glutamates per tubulin rises from one to eight, but decreases beyond this glutamylation threshold. Glutamylation is also involved in cilia motility. In terms of processing, acetylation of alpha chains at Lys-40 is located inside the microtubule lumen. This modification has been correlated with increased microtubule stability, intracellular transport and ciliary assembly. Post-translationally, methylation of alpha chains at Lys-40 is found in mitotic microtubules and is required for normal mitosis and cytokinesis contributing to genomic stability. Nitration of Tyr-449 is irreversible and interferes with normal dynein intracellular distribution. In terms of processing, undergoes a tyrosination/detyrosination cycle, the cyclic removal and re-addition of a C-terminal tyrosine residue by the enzymes tubulin tyrosine carboxypeptidase (MATCAP1, VASH1 or VASH2) and tubulin tyrosine ligase (TTL), respectively. Post-translationally, tyrosination promotes microtubule interaction with CAP-Gly domain-containing proteins such as CLIP1, CLIP2 and DCTN1. Tyrosination regulates the initiation of dynein-dynactin motility via interaction with DCTN1, which brings the dynein-dynactin complex into contact with microtubules. In neurons, tyrosinated tubulins mediate the initiation of retrograde vesicle transport. Detyrosination is involved in metaphase plate congression by guiding chromosomes during mitosis: detyrosination promotes interaction with CENPE, promoting pole-proximal transport of chromosomes toward the equator. Detyrosination increases microtubules-dependent mechanotransduction in dystrophic cardiac and skeletal muscle. In cardiomyocytes, detyrosinated microtubules are required to resist to contractile compression during contraction: detyrosination promotes association with desmin (DES) at force-generating sarcomeres, leading to buckled microtubules and mechanical resistance to contraction.

It is found in the cytoplasm. The protein localises to the cytoskeleton. It catalyses the reaction GTP + H2O = GDP + phosphate + H(+). Tubulin is the major constituent of microtubules, a cylinder consisting of laterally associated linear protofilaments composed of alpha- and beta-tubulin heterodimers. Microtubules grow by the addition of GTP-tubulin dimers to the microtubule end, where a stabilizing cap forms. Below the cap, tubulin dimers are in GDP-bound state, owing to GTPase activity of alpha-tubulin. The polypeptide is Tubulin alpha-1C chain (TUBA1C) (Bos taurus (Bovine)).